Reading from the N-terminus, the 277-residue chain is 4-hydroxy-tetrahydrodipicolinate reductase (277 aa).

Residues 11–16 and 110–112 each bind NAD(+); these read GALGRM and GTT. The active-site Proton donor/acceptor is the histidine 166. Histidine 167 serves as a coordination point for (S)-2,3,4,5-tetrahydrodipicolinate. Lysine 170 functions as the Proton donor in the catalytic mechanism. 176 to 177 contributes to the (S)-2,3,4,5-tetrahydrodipicolinate binding site; the sequence is GT.

Belongs to the DapB family.

The protein resides in the cytoplasm. It carries out the reaction (S)-2,3,4,5-tetrahydrodipicolinate + NAD(+) + H2O = (2S,4S)-4-hydroxy-2,3,4,5-tetrahydrodipicolinate + NADH + H(+). The enzyme catalyses (S)-2,3,4,5-tetrahydrodipicolinate + NADP(+) + H2O = (2S,4S)-4-hydroxy-2,3,4,5-tetrahydrodipicolinate + NADPH + H(+). It participates in amino-acid biosynthesis; L-lysine biosynthesis via DAP pathway; (S)-tetrahydrodipicolinate from L-aspartate: step 4/4. In terms of biological role, catalyzes the conversion of 4-hydroxy-tetrahydrodipicolinate (HTPA) to tetrahydrodipicolinate. The chain is 4-hydroxy-tetrahydrodipicolinate reductase from Synechococcus sp. (strain CC9902).